The chain runs to 420 residues: Reticulon-4 receptor-like 2 (420 aa).

The first 46 residues, 1-46 (MLPGLRRLLQAPASACLLLMLLALPLAAPSCPMLCTCYSSPPTVSC), serve as a signal peptide directing secretion. 2 disulfide bridges follow: Cys31-Cys37 and Cys35-Cys46. The LRRNT domain occupies 47–60 (QANNFSSVPLSLPP). An N-linked (GlcNAc...) asparagine glycan is attached at Asn50. LRR repeat units lie at residues 61-82 (STQRLFLQNNLIRTLRPGTFGS), 83-104 (NLLTLWLFSNNLSTIYPGTFRH), 107-129 (ALEELDLGDNRHLRSLEPDTFQG), 132-153 (RLQSLHLYRCQLSSLPGNIFRG), 156-177 (SLQYLYLQENSLLHLQDDLFAD), 180-201 (NLSHLFLHGNRLRLLTEHVFRG), 204-225 (SLDRLLLHGNRLQGVHRAAFRG), and 228-249 (RLTILYLFNNSLASLPGEALAD). An N-linked (GlcNAc...) asparagine glycan is attached at Asn93. The N-linked (GlcNAc...) asparagine glycan is linked to Asn236. The LRRCT domain occupies 261–312 (NPWACDCRARPLWAWFQRARVSSSDVTCATPPERQGRDLRALREADFQACPP). 2 disulfide bridges follow: Cys265/Cys288 and Cys267/Cys310. The interval 308–399 (QACPPAAPTR…CQAPPDSRGP (92 aa)) is disordered. Positions 315-327 (PTRPGSRARGNSS) are important for interaction with MAG. Positions 351-360 (LPAEDSRGRQ) are enriched in basic and acidic residues. Residue Cys390 is the site of GPI-anchor amidated cysteine attachment. The propeptide at 391–420 (QAPPDSRGPALSAGLPSPLLCLLLLVPHHL) is removed in mature form.

The protein belongs to the Nogo receptor family. As to quaternary structure, interaction with MAG is controversial, and may be indirect. Does not interact with MAG, OMG and RTN4. Interacts with MAG. Post-translationally, undergoes zinc metalloproteinase-mediated ectodomain shedding in neuroblastoma cells; is released both as a full-length ectodomain and an N-terminal fragment containing the leucine-rich repeat (LRR) region of the protein. N-glycosylated. As to expression, highly expressed in brain and liver. Expressed at lower levels in kidney, mammary gland, placenta, skeletal muscle, spleen and thyroid.

Its subcellular location is the cell membrane. The protein resides in the membrane raft. It is found in the cell projection. The protein localises to the dendrite. It localises to the perikaryon. Its subcellular location is the axon. In terms of biological role, cell surface receptor that plays a functionally redundant role in the inhibition of neurite outgrowth mediated by MAG. Plays a functionally redundant role in postnatal brain development. Contributes to normal axon migration across the brain midline and normal formation of the corpus callosum. Does not seem to play a significant role in regulating axon regeneration in the adult central nervous system. Protects motoneurons against apoptosis; protection against apoptosis is probably mediated by MAG. Like other family members, plays a role in restricting the number dendritic spines and the number of synapses that are formed during brain development. Signaling mediates activation of Rho and downstream reorganization of the actin cytoskeleton. The sequence is that of Reticulon-4 receptor-like 2 from Homo sapiens (Human).